The primary structure comprises 123 residues: Large ribosomal subunit protein uL14 (123 aa).

The protein belongs to the universal ribosomal protein uL14 family. In terms of assembly, part of the 50S ribosomal subunit. Forms a cluster with proteins L3 and L19. In the 70S ribosome, L14 and L19 interact and together make contacts with the 16S rRNA in bridges B5 and B8.

Its function is as follows. Binds to 23S rRNA. Forms part of two intersubunit bridges in the 70S ribosome. This Vibrio cholerae serotype O1 (strain ATCC 39541 / Classical Ogawa 395 / O395) protein is Large ribosomal subunit protein uL14.